We begin with the raw amino-acid sequence, 306 residues long: Small ribosomal subunit biogenesis GTPase RsgA (306 aa).

A CP-type G domain is found at 77 to 236; it reads KNELKRPNVA…IVDTPGFSKL (160 aa). Residues 126 to 129 and 179 to 187 each bind GTP; these read SKID and GQTGVGKST. Zn(2+) contacts are provided by Cys260, Cys266, His268, and Cys274.

This sequence belongs to the TRAFAC class YlqF/YawG GTPase family. RsgA subfamily. Monomer. Associates with 30S ribosomal subunit, binds 16S rRNA. Zn(2+) is required as a cofactor.

Its subcellular location is the cytoplasm. In terms of biological role, one of several proteins that assist in the late maturation steps of the functional core of the 30S ribosomal subunit. Helps release RbfA from mature subunits. May play a role in the assembly of ribosomal proteins into the subunit. Circularly permuted GTPase that catalyzes slow GTP hydrolysis, GTPase activity is stimulated by the 30S ribosomal subunit. The polypeptide is Small ribosomal subunit biogenesis GTPase RsgA (Onion yellows phytoplasma (strain OY-M)).